The chain runs to 267 residues: Protein LicA (267 aa).

This sequence belongs to the peptidase S49 family.

Mediates phase variation of the LPS epitopes. Phase variation of H.influenza LPS epitopes expressed by LicA is determined by a translational switch. The sequence is that of Protein LicA (licA) from Haemophilus influenzae (strain ATCC 51907 / DSM 11121 / KW20 / Rd).